Reading from the N-terminus, the 532-residue chain is Transcriptional regulatory protein RtcR (532 aa).

The Sigma-54 factor interaction domain maps to 186-424 (IATRNPHFNR…LSASVTRMAT (239 aa)). ATP contacts are provided by residues 215 to 222 (GPTGAGKS) and 281 to 290 (ANGGMLFLDE). Residues 485-504 (KSLSAAGRQLFDVSRQGKAS) constitute a DNA-binding region (H-T-H motif).

Its function is as follows. Transcriptional repressor of the rtcAB genes. Interacts with sigma-54. The sequence is that of Transcriptional regulatory protein RtcR (rtcR) from Escherichia coli (strain K12).